We begin with the raw amino-acid sequence, 453 residues long: uncharacterized protein (453 aa).

Cysteine 74, cysteine 80, cysteine 83, and cysteine 162 together coordinate [4Fe-4S] cluster. S-adenosyl-L-methionine is bound by residues glutamine 286, tyrosine 315, glutamate 336, and aspartate 384. Cysteine 411 serves as the catalytic Nucleophile.

The protein belongs to the class I-like SAM-binding methyltransferase superfamily. RNA M5U methyltransferase family.

This is an uncharacterized protein from Staphylococcus aureus (strain Mu50 / ATCC 700699).